The following is a 206-amino-acid chain: MELKVIDAKGQVSGSLSVSDALFAREYNEALVHQLVNAYLANARSGNRAQKTRAEVKHSTKKPWRQKGTGRARSGMTSSPLWRKGGRAFPNKPDENFTQKVNRKMYRAGMATILSQLARDERLFVIEALTAETPKTKVFAEQVKNLALEQVLFVTKRLDENVYLASRNLPNVLVLEAQQVDPYSLLRYKKVIITKDAVAQLEEQWV.

A disordered region spans residues 46 to 89 (GNRAQKTRAEVKHSTKKPWRQKGTGRARSGMTSSPLWRKGGRAF). Over residues 59-70 (STKKPWRQKGTG) the composition is skewed to basic residues.

The protein belongs to the universal ribosomal protein uL4 family. Part of the 50S ribosomal subunit.

Its function is as follows. One of the primary rRNA binding proteins, this protein initially binds near the 5'-end of the 23S rRNA. It is important during the early stages of 50S assembly. It makes multiple contacts with different domains of the 23S rRNA in the assembled 50S subunit and ribosome. In terms of biological role, forms part of the polypeptide exit tunnel. The protein is Large ribosomal subunit protein uL4 of Neisseria gonorrhoeae (strain NCCP11945).